A 44-amino-acid chain; its full sequence is Photosystem I reaction center subunit IX (44 aa).

A helical membrane pass occupies residues 7–27 (YLSVAPVLSTLSLGFLTGFLI).

The protein belongs to the PsaJ family.

Its subcellular location is the plastid membrane. In terms of biological role, may help in the organization of the PsaE and PsaF subunits. This is Photosystem I reaction center subunit IX from Cuscuta gronovii (Common dodder).